The primary structure comprises 292 residues: Probable endonuclease 4 (292 aa).

Positions 69, 109, 145, 179, 182, 216, 229, 231, and 261 each coordinate Zn(2+).

This sequence belongs to the AP endonuclease 2 family. Requires Zn(2+) as cofactor.

It carries out the reaction Endonucleolytic cleavage to 5'-phosphooligonucleotide end-products.. Endonuclease IV plays a role in DNA repair. It cleaves phosphodiester bonds at apurinic or apyrimidinic (AP) sites, generating a 3'-hydroxyl group and a 5'-terminal sugar phosphate. The protein is Probable endonuclease 4 of Desulfotalea psychrophila (strain LSv54 / DSM 12343).